The sequence spans 302 residues: Oxygen-dependent coproporphyrinogen-III oxidase (302 aa).

A substrate-binding site is contributed by S94. Residues H98 and H108 each coordinate a divalent metal cation. Catalysis depends on H108, which acts as the Proton donor. N110–R112 contributes to the substrate binding site. 2 residues coordinate a divalent metal cation: H147 and H177. The interval Y242–D277 is important for dimerization. G260–R262 provides a ligand contact to substrate.

It belongs to the aerobic coproporphyrinogen-III oxidase family. In terms of assembly, homodimer. A divalent metal cation is required as a cofactor.

The protein localises to the cytoplasm. It carries out the reaction coproporphyrinogen III + O2 + 2 H(+) = protoporphyrinogen IX + 2 CO2 + 2 H2O. Its pathway is porphyrin-containing compound metabolism; protoporphyrin-IX biosynthesis; protoporphyrinogen-IX from coproporphyrinogen-III (O2 route): step 1/1. In terms of biological role, involved in the heme biosynthesis. Catalyzes the aerobic oxidative decarboxylation of propionate groups of rings A and B of coproporphyrinogen-III to yield the vinyl groups in protoporphyrinogen-IX. This is Oxygen-dependent coproporphyrinogen-III oxidase from Alcanivorax borkumensis (strain ATCC 700651 / DSM 11573 / NCIMB 13689 / SK2).